We begin with the raw amino-acid sequence, 49 residues long: Large ribosomal subunit protein bL33B (49 aa).

It belongs to the bacterial ribosomal protein bL33 family.

The protein is Large ribosomal subunit protein bL33B of Listeria welshimeri serovar 6b (strain ATCC 35897 / DSM 20650 / CCUG 15529 / CIP 8149 / NCTC 11857 / SLCC 5334 / V8).